The sequence spans 63 residues: Large ribosomal subunit protein uL30 (63 aa).

This sequence belongs to the universal ribosomal protein uL30 family. In terms of assembly, part of the 50S ribosomal subunit.

This Rickettsia felis (strain ATCC VR-1525 / URRWXCal2) (Rickettsia azadi) protein is Large ribosomal subunit protein uL30.